The primary structure comprises 906 residues: Cadherin-2 (906 aa).

The signal sequence occupies residues M1–A25. The propeptide occupies S26–R159. Residues S96 and S135 each carry the phosphoserine modification. Cadherin domains follow at residues D160–F267, L268–F382, T383–F497, A498–P603, and Q604–R714. The Extracellular segment spans residues D160–A724. Residue E170 participates in Ca(2+) binding. N-linked (GlcNAc...) asparagine glycosylation is present at N190. Positions 226, 228, 259, 260, 261, 262, and 263 each coordinate Ca(2+). N-linked (GlcNAc...) asparagine glycosylation is present at N273. Ca(2+) contacts are provided by D293, D295, and N301. N325 is a glycosylation site (N-linked (GlcNAc...) asparagine). D353 provides a ligand contact to Ca(2+). N-linked (GlcNAc...) asparagine glycans are attached at residues N402, N572, N622, N651, and N692. The helical transmembrane segment at I725–W745 threads the bilayer. Residues M746 to D906 lie on the Cytoplasmic side of the membrane. Residues S863–G880 are compositionally biased toward low complexity. Residues S863–Y884 are disordered.

Homodimer (via extracellular region). Can also form heterodimers with other cadherins (via extracellular region). Dimerization occurs in trans, i.e. with a cadherin chain from another cell. Interacts with CDCP1. Interacts with PCDH8; this complex may also include TAOK2. The interaction with PCDH8 may lead to internalization through TAOK2/p38 MAPK pathway. Identified in a complex containing FGFR4, NCAM1, CDH2, PLCG1, FRS2, SRC, SHC1, GAP43 and CTTN. May interact with OBSCN (via protein kinase domain 2). Interacts with FBXO45. Post-translationally, cleaved by MMP24. Ectodomain cleavage leads to the generation of a soluble 90 kDa N-terminal soluble fragment and a 45 kDa membrane-bound C-terminal fragment 1 (CTF1), which is further cleaved by gamma-secretase into a 35 kDa. Cleavage in neural stem cells by MMP24 affects CDH2-mediated anchorage of neural stem cells to ependymocytes in the adult subependymal zone, leading to modulate neural stem cell quiescence. In terms of processing, may be phosphorylated by OBSCN.

Its subcellular location is the cell membrane. The protein localises to the sarcolemma. It localises to the cell junction. It is found in the cell surface. The protein resides in the desmosome. Its subcellular location is the adherens junction. Functionally, calcium-dependent cell adhesion protein; preferentially mediates homotypic cell-cell adhesion by dimerization with a CDH2 chain from another cell. Cadherins may thus contribute to the sorting of heterogeneous cell types. Acts as a regulator of neural stem cells quiescence by mediating anchorage of neural stem cells to ependymocytes in the adult subependymal zone: upon cleavage by MMP24, CDH2-mediated anchorage is affected, leading to modulate neural stem cell quiescence. Plays a role in cell-to-cell junction formation between pancreatic beta cells and neural crest stem (NCS) cells, promoting the formation of processes by NCS cells. CDH2 may be involved in neuronal recognition mechanism. In hippocampal neurons, may regulate dendritic spine density. This Rhinolophus ferrumequinum (Greater horseshoe bat) protein is Cadherin-2 (CDH2).